Reading from the N-terminus, the 336-residue chain is Pyridoxal 5'-phosphate synthase subunit PdxS (336 aa).

Residue D33 participates in D-ribose 5-phosphate binding. K90 functions as the Schiff-base intermediate with D-ribose 5-phosphate in the catalytic mechanism. A D-ribose 5-phosphate-binding site is contributed by G162. R174 provides a ligand contact to D-glyceraldehyde 3-phosphate. D-ribose 5-phosphate is bound by residues G260 and 281 to 282; that span reads GS.

It belongs to the PdxS/SNZ family. In the presence of PdxT, forms a dodecamer of heterodimers.

The enzyme catalyses aldehydo-D-ribose 5-phosphate + D-glyceraldehyde 3-phosphate + L-glutamine = pyridoxal 5'-phosphate + L-glutamate + phosphate + 3 H2O + H(+). It participates in cofactor biosynthesis; pyridoxal 5'-phosphate biosynthesis. In terms of biological role, catalyzes the formation of pyridoxal 5'-phosphate from ribose 5-phosphate (RBP), glyceraldehyde 3-phosphate (G3P) and ammonia. The ammonia is provided by the PdxT subunit. Can also use ribulose 5-phosphate and dihydroxyacetone phosphate as substrates, resulting from enzyme-catalyzed isomerization of RBP and G3P, respectively. In Picrophilus torridus (strain ATCC 700027 / DSM 9790 / JCM 10055 / NBRC 100828 / KAW 2/3), this protein is Pyridoxal 5'-phosphate synthase subunit PdxS.